A 193-amino-acid chain; its full sequence is Acyl carrier protein phosphodiesterase (193 aa).

The protein belongs to the AcpH family.

The catalysed reaction is holo-[ACP] + H2O = apo-[ACP] + (R)-4'-phosphopantetheine + H(+). Its function is as follows. Converts holo-ACP to apo-ACP by hydrolytic cleavage of the phosphopantetheine prosthetic group from ACP. This is Acyl carrier protein phosphodiesterase from Yersinia enterocolitica serotype O:8 / biotype 1B (strain NCTC 13174 / 8081).